The chain runs to 277 residues: Large ribosomal subunit protein uL2 (277 aa).

Positions 219-277 (TVRGSVMNPNDHPHGGGEGKAPVGRKAPSTPWGKPALGLKTRNKKAKSDKLIVRRRNQK) are disordered.

It belongs to the universal ribosomal protein uL2 family. Part of the 50S ribosomal subunit. Forms a bridge to the 30S subunit in the 70S ribosome.

One of the primary rRNA binding proteins. Required for association of the 30S and 50S subunits to form the 70S ribosome, for tRNA binding and peptide bond formation. It has been suggested to have peptidyltransferase activity; this is somewhat controversial. Makes several contacts with the 16S rRNA in the 70S ribosome. In Streptococcus suis (strain 98HAH33), this protein is Large ribosomal subunit protein uL2.